The chain runs to 287 residues: ATP synthase gamma chain (287 aa).

The protein belongs to the ATPase gamma chain family. In terms of assembly, F-type ATPases have 2 components, CF(1) - the catalytic core - and CF(0) - the membrane proton channel. CF(1) has five subunits: alpha(3), beta(3), gamma(1), delta(1), epsilon(1). CF(0) has three main subunits: a, b and c.

The protein resides in the cell inner membrane. Functionally, produces ATP from ADP in the presence of a proton gradient across the membrane. The gamma chain is believed to be important in regulating ATPase activity and the flow of protons through the CF(0) complex. This chain is ATP synthase gamma chain, found in Pectobacterium carotovorum subsp. carotovorum (strain PC1).